We begin with the raw amino-acid sequence, 145 residues long: DNA polymerase epsilon subunit 3 (145 aa).

A2 carries the post-translational modification N-acetylalanine. T83 carries the phosphothreonine modification. A coiled-coil region spans residues 85 to 144 (LKEALEAYRREQKGKKEASEQKKKDKDKKDCEEQDKSREEEDEDEERLDEEEQNEEEEVD). Basic and acidic residues predominate over residues 93-123 (RREQKGKKEASEQKKKDKDKKDCEEQDKSRE). The segment at 93–145 (RREQKGKKEASEQKKKDKDKKDCEEQDKSREEEDEDEERLDEEEQNEEEEVDN) is disordered. S121 is modified (phosphoserine). Over residues 124–145 (EEDEDEERLDEEEQNEEEEVDN) the composition is skewed to acidic residues.

In terms of assembly, component of the DNA polymerase epsilon complex consisting of four subunits: the catalytic subunit POLE and the accessory subunits POLE2, POLE3 and POLE4. Interaction with POLE4 is a prerequisite for further binding with POLE and POLE2. Heterodimer with CHRAC1; binds to DNA. Component of the CHRAC ISWI chromatin remodeling complex at least composed of SMARCA5/SNF2H, BAZ1A/ACF1, CHRAC1 and POLE3; the complex preferentially binds DNA through the CHRAC1-POLE3 heterodimer and possesses ATP-dependent nucleosome-remodeling activity. Within the complex, the heterodimer with CHRAC1 interacts with SMARCA5/SNF2H; the interaction is direct and enhances nucleosome sliding activity by the SMARCA5/SNF2H and BAZ1A/ACF1 interaction. Within the complex, the heterodimer with CHRAC1 interacts with BAZ1A/ACF1; the interactions are direct.

It is found in the nucleus. Functionally, accessory component of the DNA polymerase epsilon complex. Participates in DNA repair and in chromosomal DNA replication. Forms a complex with CHRAC1 and binds naked DNA, which is then incorporated into chromatin, aided by the nucleosome-remodeling activity of ISWI/SNF2H and ACF1. Does not enhance nucleosome sliding activity of the ACF-5 ISWI chromatin remodeling complex. The protein is DNA polymerase epsilon subunit 3 (Pole3) of Rattus norvegicus (Rat).